Here is a 591-residue protein sequence, read N- to C-terminus: Dihydroxyacetone kinase 2 (591 aa).

A DhaK domain is found at 8–344 (SDGNIVTPYL…FDYPTTASGW (337 aa)). A disordered region spans residues 40 to 59 (ASAPNSGNPPKVSLVSGGGS). Residues 58 to 61 (GSGH), lysine 109, and aspartate 114 each bind substrate. The active-site Tele-hemiaminal-histidine intermediate is the histidine 223. The 204-residue stretch at 384–587 (DTFAKILLAG…LAALLDGFVT (204 aa)) folds into the DhaL domain. Residues 413–416 (DGDC), 459–460 (TS), 511–512 (TL), and 572–574 (DPG) each bind ATP.

It belongs to the dihydroxyacetone kinase (DAK) family.

It catalyses the reaction dihydroxyacetone + ATP = dihydroxyacetone phosphate + ADP + H(+). It carries out the reaction D-glyceraldehyde + ATP = D-glyceraldehyde 3-phosphate + ADP + H(+). Its pathway is polyol metabolism; glycerol fermentation; glycerone phosphate from glycerol (oxidative route): step 2/2. In terms of biological role, catalyzes both the phosphorylation of dihydroxyacetone and of glyceraldehyde. The protein is Dihydroxyacetone kinase 2 (DAK2) of Saccharomyces cerevisiae (strain ATCC 204508 / S288c) (Baker's yeast).